Reading from the N-terminus, the 253-residue chain is Nurim homolog (253 aa).

Residues 1 to 2 lie on the Nuclear side of the membrane; it reads MT. The helical transmembrane segment at 3 to 30 threads the bilayer; it reads SIAKSIVLLASLATFAYSLYVVGSLMMF. Residues 31 to 56 are Perinuclear space-facing; the sequence is LSTPRSISKAHTWIFNLLDNKSRLQT. Residues 57–78 form a helical membrane-spanning segment; that stretch reads AYGPVVFDTLYLIGFIFQHSFL. Over 79–96 the chain is Nuclear; it reads KSAVVKKLLAKLGLSGAE. A helical membrane pass occupies residues 97–113; it reads RTIYSLTSSLCLHYLIV. The Perinuclear space portion of the chain corresponds to 114–132; that stretch reads NWLPAQSIVLWQIDVEQSA. Residues 133–161 traverse the membrane as a helical segment; the sequence is PLWWTFVITHGICWVVIFGGSLVMDLPEL. At 162 to 188 the chain is on the nuclear side; that stretch reads LGVKQAYYDLKAYGPPISYKSGELRNL. A helical transmembrane segment spans residues 189-207; that stretch reads YAHVRHPSFVGLSVILFAT. The Perinuclear space portion of the chain corresponds to 208 to 213; the sequence is NVMSVD. A helical membrane pass occupies residues 214-231; the sequence is RLVMALLLTTYMYLAWST. The Nuclear segment spans residues 232–253; sequence DQKDVAYQKIQLQRKKLELKAK.

This sequence belongs to the nurim family.

The protein resides in the nucleus inner membrane. In Drosophila melanogaster (Fruit fly), this protein is Nurim homolog (nrm).